We begin with the raw amino-acid sequence, 405 residues long: Bifunctional enzyme IspD/IspF (405 aa).

Residues M1–R240 form a 2-C-methyl-D-erythritol 4-phosphate cytidylyltransferase region. Positions R240–N405 are 2-C-methyl-D-erythritol 2,4-cyclodiphosphate synthase. 2 residues coordinate a divalent metal cation: D246 and H248. Residues D246 to H248 and H277 to S278 contribute to the 4-CDP-2-C-methyl-D-erythritol 2-phosphate site. Residue H285 coordinates a divalent metal cation. 4-CDP-2-C-methyl-D-erythritol 2-phosphate contacts are provided by residues D299–G301, T375–E378, and R385.

It in the N-terminal section; belongs to the IspD/TarI cytidylyltransferase family. IspD subfamily. The protein in the C-terminal section; belongs to the IspF family. It depends on a divalent metal cation as a cofactor.

It carries out the reaction 2-C-methyl-D-erythritol 4-phosphate + CTP + H(+) = 4-CDP-2-C-methyl-D-erythritol + diphosphate. The catalysed reaction is 4-CDP-2-C-methyl-D-erythritol 2-phosphate = 2-C-methyl-D-erythritol 2,4-cyclic diphosphate + CMP. It participates in isoprenoid biosynthesis; isopentenyl diphosphate biosynthesis via DXP pathway; isopentenyl diphosphate from 1-deoxy-D-xylulose 5-phosphate: step 2/6. It functions in the pathway isoprenoid biosynthesis; isopentenyl diphosphate biosynthesis via DXP pathway; isopentenyl diphosphate from 1-deoxy-D-xylulose 5-phosphate: step 4/6. Functionally, bifunctional enzyme that catalyzes the formation of 4-diphosphocytidyl-2-C-methyl-D-erythritol from CTP and 2-C-methyl-D-erythritol 4-phosphate (MEP) (IspD), and catalyzes the conversion of 4-diphosphocytidyl-2-C-methyl-D-erythritol 2-phosphate (CDP-ME2P) to 2-C-methyl-D-erythritol 2,4-cyclodiphosphate (ME-CPP) with a corresponding release of cytidine 5-monophosphate (CMP) (IspF). The polypeptide is Bifunctional enzyme IspD/IspF (Wolbachia sp. subsp. Brugia malayi (strain TRS)).